The primary structure comprises 629 residues: tRNA uridine 5-carboxymethylaminomethyl modification enzyme MnmG (629 aa).

13–18 (GGGHAG) contacts FAD. Position 273–287 (273–287 (GPRYCPSIEDKVVRF)) interacts with NAD(+).

This sequence belongs to the MnmG family. As to quaternary structure, homodimer. Heterotetramer of two MnmE and two MnmG subunits. FAD is required as a cofactor.

Its subcellular location is the cytoplasm. Functionally, NAD-binding protein involved in the addition of a carboxymethylaminomethyl (cmnm) group at the wobble position (U34) of certain tRNAs, forming tRNA-cmnm(5)s(2)U34. The sequence is that of tRNA uridine 5-carboxymethylaminomethyl modification enzyme MnmG from Alkalilimnicola ehrlichii (strain ATCC BAA-1101 / DSM 17681 / MLHE-1).